The chain runs to 1296 residues: Capping protein, Arp2/3 and myosin-I linker protein 2 (1296 aa).

LRR repeat units lie at residues 63 to 87, 88 to 110, 248 to 271, 273 to 296, 305 to 328, 363 to 386, 395 to 415, 426 to 448, 453 to 477, 480 to 506, 515 to 538, 542 to 565, 570 to 594, 598 to 621, and 836 to 859; these read DCTF…TFEL, ESLP…AQHV, ELVL…LAGH, NSGL…ALGR, DSTL…DSGG, CSSL…AAPA, TRML…ALRA, IHDL…VIQD, AGAL…VLAI, SRSL…VLHR, DCPL…LIRA, NPKL…MLAK, NTRL…VAQA, NHSL…RPEL, and TMAP…GLEE. Positions 507 to 601 are tropomodulin-like; sequence IAQLMQDDDC…AQALEQNHSL (95 aa). Residues 975 to 1002 form a necessary for localization at the cell membrane region; that stretch reads ATPVPRTLRKKLGTLFAFKKPRSTRGPR. Residues 988–1296 are disordered; the sequence is TLFAFKKPRS…TDQRGGGPNP (309 aa). A Phosphoserine modification is found at Ser1008. Composition is skewed to basic and acidic residues over residues 1079-1091 and 1118-1134; these read RPDK…RGDT and ESKR…KAGS. Position 1134 is a phosphoserine (Ser1134). The residue at position 1145 (Thr1145) is a Phosphothreonine. A compositionally biased stretch (polar residues) spans 1176-1185; sequence TWKTLGQQLN. Omega-N-methylarginine is present on Arg1191. Pro residues-rich tracts occupy residues 1199-1209 and 1267-1285; these read PGPPSPCPSPS and PLPP…PPSP. A phosphoserine mark is found at Ser1203 and Ser1281.

Belongs to the CARMIL family. Forms homodimers. Interacts (via C-terminus) with heterodimeric capping protein (CP); the interaction inhibits CP activity and hence promotes actin polymerization at the barbed end of actin filaments.

The protein localises to the cytoplasm. Its subcellular location is the cytoskeleton. The protein resides in the cell membrane. It localises to the cell projection. It is found in the lamellipodium. The protein localises to the ruffle. Its function is as follows. Cell membrane-cytoskeleton-associated protein that plays a role in the regulation of actin polymerization at the barbed end of actin filaments. Prevents F-actin heterodimeric capping protein (CP) activity at the leading edges of migrating cells, and hence generates uncapped barbed ends and enhances actin polymerization. Plays a role in cell protrusion formations; involved in cell polarity, lamellipodial assembly, membrane ruffling and macropinosome formations. Involved as well in cell migration and invadopodia formation during wound healing. Required for CD28-mediated stimulation of NF-kappa-B signaling, involved in naive T cells activation, maturation into T memory cells, and differentiation into T helper cells. Required for CD28-mediated differentiation of T regulatory cells. This chain is Capping protein, Arp2/3 and myosin-I linker protein 2, found in Mus musculus (Mouse).